The primary structure comprises 184 residues: CASP-like protein 1U1 (184 aa).

The Cytoplasmic portion of the chain corresponds to 1 to 30 (MSSTGTTLSASEGDKGFRNGAAPAKSKSHS). Residues 31-51 (TIALLRLLAFAATLSAFVTMI) traverse the membrane as a helical segment. Over 52–76 (TNKQKITIGPFTRWSKWHYSDAFMW) the chain is Extracellular. Residues 77–97 (FVVANCIAFIYLLFAAILGLI) form a helical membrane-spanning segment. Topologically, residues 98–111 (SHSPMLVKHLVILD) are cytoplasmic. The chain crosses the membrane as a helical span at residues 112–132 (LIVSYMLFSAASAATAVAYIG). The Extracellular portion of the chain corresponds to 133–154 (KNGISQPGWTAICGVFERYCHH). A helical transmembrane segment spans residues 155–175 (VAGALVACFLGWLFLTIAVFL). Residues 176–184 (GMRRSPAAV) lie on the Cytoplasmic side of the membrane.

Belongs to the Casparian strip membrane proteins (CASP) family. In terms of assembly, homodimer and heterodimers.

The protein resides in the cell membrane. This is CASP-like protein 1U1 from Marchantia polymorpha (Common liverwort).